We begin with the raw amino-acid sequence, 63 residues long: QHWSYGLRPGGKRNAERLGDSFQEMDKEVDQLAEPQHLECTVHWPRSPLRDLRGVLESLIEEE.

A Pyrrolidone carboxylic acid modification is found at Gln-1. Position 10 is a glycine amide (Gly-10).

This sequence belongs to the GnRH family. In terms of processing, the precursor is cleaved by ACE, which removes the Gly-Lys-Arg peptide at the C-terminus, leading to mature hormone. The mature form of Gonadoliberin-1 is also cleaved and degraded by ACE.

It is found in the secreted. Stimulates the secretion of gonadotropins; it stimulates the secretion of both luteinizing and follicle-stimulating hormones. This chain is Progonadoliberin-1 (GNRH1), found in Mesocricetus auratus (Golden hamster).